A 383-amino-acid chain; its full sequence is UDP-N-acetylglucosamine--N-acetylmuramyl-(pentapeptide) pyrophosphoryl-undecaprenol N-acetylglucosamine transferase (383 aa).

Residues 10 to 12 (TGG), Asn124, Arg165, Ser190, Ile245, and Gln290 each bind UDP-N-acetyl-alpha-D-glucosamine. The interval 364 to 383 (PFGQAREPGQKPARPPDLAS) is disordered.

Belongs to the glycosyltransferase 28 family. MurG subfamily.

The protein resides in the cell inner membrane. The catalysed reaction is di-trans,octa-cis-undecaprenyl diphospho-N-acetyl-alpha-D-muramoyl-L-alanyl-D-glutamyl-meso-2,6-diaminopimeloyl-D-alanyl-D-alanine + UDP-N-acetyl-alpha-D-glucosamine = di-trans,octa-cis-undecaprenyl diphospho-[N-acetyl-alpha-D-glucosaminyl-(1-&gt;4)]-N-acetyl-alpha-D-muramoyl-L-alanyl-D-glutamyl-meso-2,6-diaminopimeloyl-D-alanyl-D-alanine + UDP + H(+). The protein operates within cell wall biogenesis; peptidoglycan biosynthesis. In terms of biological role, cell wall formation. Catalyzes the transfer of a GlcNAc subunit on undecaprenyl-pyrophosphoryl-MurNAc-pentapeptide (lipid intermediate I) to form undecaprenyl-pyrophosphoryl-MurNAc-(pentapeptide)GlcNAc (lipid intermediate II). The protein is UDP-N-acetylglucosamine--N-acetylmuramyl-(pentapeptide) pyrophosphoryl-undecaprenol N-acetylglucosamine transferase of Anaeromyxobacter sp. (strain K).